Consider the following 135-residue polypeptide: Small ribosomal subunit protein bS18 (135 aa).

Residues Met-1–Phe-65 form a disordered region. Positions Pro-9–Arg-41 are enriched in gly residues. Over residues Gly-42 to Gly-61 the composition is skewed to basic and acidic residues.

This sequence belongs to the bacterial ribosomal protein bS18 family. Part of the 30S ribosomal subunit. Forms a tight heterodimer with protein bS6.

Its function is as follows. Binds as a heterodimer with protein bS6 to the central domain of the 16S rRNA, where it helps stabilize the platform of the 30S subunit. This chain is Small ribosomal subunit protein bS18, found in Anaeromyxobacter sp. (strain K).